A 299-amino-acid chain; its full sequence is uncharacterized protein (299 aa).

The interval 1-20 (MTTKHELVINTNEPSAPNAD) is disordered. A helical membrane pass occupies residues 172–192 (SFFIPPMVVISTPICLGLTVF).

Belongs to the IIV-6 259R family.

Its subcellular location is the membrane. This is an uncharacterized protein from Acheta domesticus (House cricket).